We begin with the raw amino-acid sequence, 363 residues long: Ribosomal RNA large subunit methyltransferase M (363 aa).

S-adenosyl-L-methionine is bound by residues Ser-194, 227-230 (CPGG), Asp-246, Asp-266, and Asp-284. Lys-313 acts as the Proton acceptor in catalysis.

Belongs to the class I-like SAM-binding methyltransferase superfamily. RNA methyltransferase RlmE family. RlmM subfamily. As to quaternary structure, monomer.

It is found in the cytoplasm. The catalysed reaction is cytidine(2498) in 23S rRNA + S-adenosyl-L-methionine = 2'-O-methylcytidine(2498) in 23S rRNA + S-adenosyl-L-homocysteine + H(+). Its function is as follows. Catalyzes the 2'-O-methylation at nucleotide C2498 in 23S rRNA. The protein is Ribosomal RNA large subunit methyltransferase M of Haemophilus influenzae (strain PittEE).